Reading from the N-terminus, the 398-residue chain is Cytochrome b (398 aa).

Helical transmembrane passes span 38-58 (FGPL…FLAM), 82-104 (WFLR…FHMF), 119-139 (VRCS…IGYV), and 185-205 (FFSL…LHLG). Histidine 88 and histidine 102 together coordinate heme b. Heme b is bound by residues histidine 189 and histidine 203. Residue histidine 208 coordinates a ubiquinone. Transmembrane regions (helical) follow at residues 231–251 (YYVK…IFIF), 295–316 (AGGV…FLNQ), 328–348 (IYHI…WIGC), and 355–374 (FVTI…AIMP).

The protein belongs to the cytochrome b family. The main subunits of complex b-c1 are: cytochrome b, cytochrome c1 and the Rieske protein. The cofactor is heme b.

It localises to the mitochondrion inner membrane. Functionally, component of the ubiquinol-cytochrome c reductase complex (complex III or cytochrome b-c1 complex) that is part of the mitochondrial respiratory chain. The b-c1 complex mediates electron transfer from ubiquinol to cytochrome c. Contributes to the generation of a proton gradient across the mitochondrial membrane that is then used for ATP synthesis. The sequence is that of Cytochrome b (MT-CYB) from Daucus carota (Wild carrot).